A 178-amino-acid polypeptide reads, in one-letter code: MSRIGRLPIDVPAGVDVSVDGQHVTVKGPKGELSLTIAQPIRAEVQDGQVLVTRPDDERESRSLHGLTRSLIANNIVGVTTGYTKGLEIVGTGYRVALKDKGVEFALGFSHPVYVEAPAGISFTVEGVNKMTVVGIDKQLVGETAANIRKIRKPEPYKGKGVRYAGENVRRKAGKSGK.

The protein belongs to the universal ribosomal protein uL6 family. As to quaternary structure, part of the 50S ribosomal subunit.

This protein binds to the 23S rRNA, and is important in its secondary structure. It is located near the subunit interface in the base of the L7/L12 stalk, and near the tRNA binding site of the peptidyltransferase center. This chain is Large ribosomal subunit protein uL6, found in Clavibacter sepedonicus (Clavibacter michiganensis subsp. sepedonicus).